The following is a 353-amino-acid chain: Vomeronasal type-1 receptor 1 (353 aa).

Residues 1-56 (MVGDTLKLLSPLMTRYFFLLFYSTDSSDLNENQHPLDFDEMAFGKVKSGISFLIQT) lie on the Extracellular side of the membrane. A helical transmembrane segment spans residues 57 to 77 (GVGILGNSFLLCFYNLILFTG). At 78–84 (HKLRPTD) the chain is on the cytoplasmic side. Residues 85 to 105 (LILSHLALANSMVLFFKGIPQ) traverse the membrane as a helical segment. Residues 106–132 (TMAAFGLKYLLNDTGCKFVFYYHRVGT) are Extracellular-facing. An N-linked (GlcNAc...) asparagine glycan is attached at asparagine 117. Residues 133–153 (RVSLSTICLLNGFQAIKLNPS) traverse the membrane as a helical segment. At 154–169 (ICRWMEIKIRSPRFID) the chain is on the cytoplasmic side. A helical membrane pass occupies residues 170-190 (FCCLLCWVPHVLMNASVLLLV). Topologically, residues 191-226 (NGPLNSKNSSAKNNYGYCSYKASKRFSSLHAVLYFS) are extracellular. N-linked (GlcNAc...) asparagine glycosylation is present at asparagine 198. A helical transmembrane segment spans residues 227 to 247 (PDFMSLGFMVWASGSMVFFLY). Over 248–274 (RHKQQVQHNHSNRLSCRPSQETRATRT) the chain is Cytoplasmic. Residues 275–295 (IMVLVSSFFVFYSVHSFLTIW) traverse the membrane as a helical segment. At 296–303 (TTVVANPG) the chain is on the extracellular side. The chain crosses the membrane as a helical span at residues 304–324 (QWIVNNSVLVASYFPSRSPFV). Topologically, residues 325-353 (LIMSDTRISQFCFACRTRKTLFPNLVVMP) are cytoplasmic.

This sequence belongs to the G-protein coupled receptor 1 family.

Its subcellular location is the cell membrane. Putative pheromone receptor. This Gorilla gorilla gorilla (Western lowland gorilla) protein is Vomeronasal type-1 receptor 1 (VN1R1).